The chain runs to 726 residues: PWWP domain-containing protein 2 (726 aa).

Residues 1–10 (MSTESERIES) show a composition bias toward basic and acidic residues. The segment at 1 to 26 (MSTESERIESVSEANASSLEVGNDQM) is disordered. Residues 12–26 (SEANASSLEVGNDQM) are compositionally biased toward polar residues. The region spanning 199–260 (DSDLVWAKVR…ASRIKPFRQH (62 aa)) is the PWWP domain. Residues 392 to 441 (APKISPAEEQSSLVEVSDPEPTKSKQVYTKRRKTNLQTEQSSLVEVSDPD) form a disordered region. The segment covering 426-435 (NLQTEQSSLV) has biased composition (polar residues). 2 short sequence motifs (nuclear localization signal) span residues 460 to 467 (KKKEKTLA) and 495 to 502 (KKRKVVQS). Disordered stretches follow at residues 472 to 545 (EKRV…PQKA) and 568 to 726 (TRLL…VSAE). Residues 494-512 (EKKRKVVQSKVPKSTKKIK) are compositionally biased toward basic residues. Residues 606-634 (SPSTTLSSPHAASVTKTTSGKSNSVSLDH) show a composition bias toward polar residues. The span at 658 to 688 (LESRDLKDSSKEQVVHEDKKEAANVADEKSI) shows a compositional bias: basic and acidic residues.

Belongs to the PDP family. As to quaternary structure, interacts with DEK3. Binds to MSI4/FVE and MSI5. Component of the PRC2 (polycomb repressive complex 2) complex which regulates histone methylation on histone H3K27.

The protein resides in the nucleus. Its function is as follows. Together with PDP1, PDP3 and PDP6, interacts with MSI4/FVE and MSI5 to suppress FLC, MAF4 and MAF5 expression by regulating the function of the PRC2 complex and modulating H3K27me3 level, thereby promoting flowering. The chain is PWWP domain-containing protein 2 from Arabidopsis thaliana (Mouse-ear cress).